The chain runs to 502 residues: MQDRSDQFVLALDQGTTSTRAILFGRKGDIHGVAQQEITQHYPQPGWVEHDAEEIWQAQLAVARAALRDNGILAKQIVAVGMTNQRETTVLWDRSSGEPLHRAIVWQDRRTAGLCDELTTAGHAGLFRERTGLVLDAYFSGTKLKWLLDHIPGARSRAERGELAFGTIDSWLTWKLSGGRAHVTDPSNASRTLLFDIHRCCWDEELLALLDIPMALLPRIVDSSGEIATIAAEWLGAEIPLSGIAGDQQAATFGQVCLQHGMAKNTYGTGCFLLMNTGQAPMASCHRLLTTIGWQRQGKTTYLLEGSVFMGGATVQWLRDGLGLISSADQIESLAASVADNGGVYLVPAHTGLGAPYWDPFARGALFGMTRGTTRAHIARAALEAIAFQSADVLQAMEKDAGQSLSELRVDGGAARNDLLMQFQADLLGVPVVRPQVTETTALGAAYLAGLAVGFWQDEAELTALWRADRRFEPSMAEDRRSALFADWHRAVERSLHWANAT.

Residue Thr-16 participates in ADP binding. Thr-16, Thr-17, and Ser-18 together coordinate ATP. Residue Thr-16 participates in sn-glycerol 3-phosphate binding. Arg-20 is a binding site for ADP. 4 residues coordinate sn-glycerol 3-phosphate: Arg-86, Glu-87, Tyr-138, and Asp-247. Residues Arg-86, Glu-87, Tyr-138, Asp-247, and Gln-248 each coordinate glycerol. ADP contacts are provided by Thr-269 and Gly-312. Residues Thr-269, Gly-312, Gln-316, and Gly-413 each coordinate ATP. The ADP site is built by Gly-413 and Asn-417.

Belongs to the FGGY kinase family.

The catalysed reaction is glycerol + ATP = sn-glycerol 3-phosphate + ADP + H(+). It participates in polyol metabolism; glycerol degradation via glycerol kinase pathway; sn-glycerol 3-phosphate from glycerol: step 1/1. Inhibited by fructose 1,6-bisphosphate (FBP). Key enzyme in the regulation of glycerol uptake and metabolism. Catalyzes the phosphorylation of glycerol to yield sn-glycerol 3-phosphate. This chain is Glycerol kinase, found in Dechloromonas aromatica (strain RCB).